The chain runs to 288 residues: Nucleotide-binding protein NE1849 (288 aa).

8 to 15 (GLSGSGKS) serves as a coordination point for ATP. Residue 57–60 (DMRS) coordinates GTP.

Belongs to the RapZ-like family.

In terms of biological role, displays ATPase and GTPase activities. The sequence is that of Nucleotide-binding protein NE1849 from Nitrosomonas europaea (strain ATCC 19718 / CIP 103999 / KCTC 2705 / NBRC 14298).